An 817-amino-acid polypeptide reads, in one-letter code: MLRFPTCFPSFRVVGEKQLPQEIIFLVWSPKRDLIALANTAGEVLLHRLASFHRVWSFPPNENTGKEVTCLAWRPDGKLLAFALADTKKIVLCDVEKPGSLHSFSVEAPVSCMHWMEVTVESSVLTSFYNAEDESNLLLPKLPTLPKNYSSTSKIFSEENSDEIIKLLGDVRLNILVLGGSSGFIELYAYGMFKIARVTGIAGTCLALCLSSDLKSLSVVTEVSTNGASEVSYFQLETNLLYSFLPEVTRMARKFTHISALLQYINLSLTCMCEAWEEILMQMDSRLTKFVQEKNTTTSVQDEFMHLLLWGKASAELQTLLMNQLTVKGLKKLGQSIESSYSSIQKLVISHLQSGSESLLYHLSELKGLASWKQKYEPLGLDAAGIEEAITAVGSFILKANELLQVIDSSMKNFKAFFRWLYVAMLRMTEDHVLPELNKMTQKDITFVAEFLTEHFNEAPDLYNRKGKYFNVERVGQYLKDEDDDLVSPPNTEGNQWYDFLQNSSHLKESPLLFPYYPRKSLHFVKRRMENIIDQCLQKPADVIGKSMNQAICIPLYRDTRSEDSIRRLFKFPFLWNNKTSNLHYLLFTILEDSLYKMCILRRHTDISQSVSNGLIAIKFGSFTYATTEKVRRSIYSCLDAQFYDDETVTVVLKDTVGREGRDRLLVQLPLSLVYNSEDSAEYQFTGTYSTRLDEQCSAIPTRTMHFEKHWRLLESMKAQYVAGNGFRKVSCVLSSNLRHVRVFEMDIDDEWELDESSDEEEEASNKPVKIKEEVLSESEAENQQAGAAALAPEIVIKVEKLDPELDSQSSLPLLCV.

Y469 carries the post-translational modification Phosphotyrosine. 2 positions are modified to phosphoserine: S757 and S758. A Glycyl lysine isopeptide (Lys-Gly) (interchain with G-Cter in SUMO2) cross-link involves residue K772. Residues S777 and S779 each carry the phosphoserine modification. K798 is covalently cross-linked (Glycyl lysine isopeptide (Lys-Gly) (interchain with G-Cter in SUMO2)).

This sequence belongs to the APC4 family. The mammalian APC/C is composed at least of 14 distinct subunits ANAPC1, ANAPC2, CDC27/APC3, ANAPC4, ANAPC5, CDC16/APC6, ANAPC7, CDC23/APC8, ANAPC10, ANAPC11, CDC26/APC12, ANAPC13, ANAPC15 and ANAPC16 that assemble into a complex of at least 19 chains with a combined molecular mass of around 1.2 MDa; APC/C interacts with FZR1 and FBXO5. In the context of the APC/C complex, directly interacts with UBE2S.

Its subcellular location is the nucleus. The protein operates within protein modification; protein ubiquitination. Component of the anaphase promoting complex/cyclosome (APC/C), a cell cycle-regulated E3 ubiquitin ligase that controls progression through mitosis and the G1 phase of the cell cycle. The APC/C complex acts by mediating ubiquitination and subsequent degradation of target proteins: it mainly mediates the formation of 'Lys-11'-linked polyubiquitin chains and, to a lower extent, the formation of 'Lys-48'- and 'Lys-63'-linked polyubiquitin chains. The APC/C complex catalyzes assembly of branched 'Lys-11'-/'Lys-48'-linked branched ubiquitin chains on target proteins. This chain is Anaphase-promoting complex subunit 4 (ANAPC4), found in Pongo abelii (Sumatran orangutan).